Here is a 231-residue protein sequence, read N- to C-terminus: Demethylmenaquinone methyltransferase (231 aa).

Residues T62, D80, 102-103, and S119 contribute to the S-adenosyl-L-methionine site; that span reads DA.

This sequence belongs to the class I-like SAM-binding methyltransferase superfamily. MenG/UbiE family.

The catalysed reaction is a 2-demethylmenaquinol + S-adenosyl-L-methionine = a menaquinol + S-adenosyl-L-homocysteine + H(+). Its pathway is quinol/quinone metabolism; menaquinone biosynthesis; menaquinol from 1,4-dihydroxy-2-naphthoate: step 2/2. Methyltransferase required for the conversion of demethylmenaquinol (DMKH2) to menaquinol (MKH2). In Streptomyces avermitilis (strain ATCC 31267 / DSM 46492 / JCM 5070 / NBRC 14893 / NCIMB 12804 / NRRL 8165 / MA-4680), this protein is Demethylmenaquinone methyltransferase.